Reading from the N-terminus, the 409-residue chain is MDYSAALDQAIGKLHEEGRYRTFIDIERRKGAYPQAVWTRPDGTETRITVWCGNDYLGMGQHPVVLAAMHEALDATGAGSGGTRNISGTTVYHKRLEAELSDLHGKEAALVFSSAYIANDATLSTLRKLFPGLIIYSDELNHASMIEGIKRFDGAKRIFRHNDVAHLRELLAADDPEAPKLIAFESIYSMDGDFGPIKAICDLADEFNALTYLDEVHAVGMYGPRGGGVAERDGLSHRIDIFNGTLGKAFGVFGGYIAASARMVDAIRSYAPGFIFTTSLPPAVAAGAAASIAFLKTAEGQLLRDQQQLNARILKMRLRGLGMPIMDHGSHIVPVHVGNPVHCKALSDMLLADFGIYVQPINFPTVPRGTERLRFTPSPVHDPKQIDHLVKAMDSLWSQCKLNRSTSAA.

Substrate contacts are provided by Arg-21, Ser-137, and Lys-156. Pyridoxal 5'-phosphate contacts are provided by Ser-189, His-217, and Thr-245. Residue Lys-248 is part of the active site. Lys-248 carries the post-translational modification N6-(pyridoxal phosphate)lysine. 2 residues coordinate pyridoxal 5'-phosphate: Thr-277 and Thr-278. A substrate-binding site is contributed by Thr-365.

It belongs to the class-II pyridoxal-phosphate-dependent aminotransferase family. As to quaternary structure, homodimer. Requires pyridoxal 5'-phosphate as cofactor.

It carries out the reaction succinyl-CoA + glycine + H(+) = 5-aminolevulinate + CO2 + CoA. Its pathway is porphyrin-containing compound metabolism; protoporphyrin-IX biosynthesis; 5-aminolevulinate from glycine: step 1/1. This is 5-aminolevulinate synthase (hemA) from Paracoccus denitrificans (strain Pd 1222).